The following is a 223-amino-acid chain: Putative C-type lectin protein 51 (223 aa).

Residues 1 to 31 (MAKRINFTSCLIFTSCFTAFIVSLCLLVSSC) form the signal peptide. The C-type lectin domain occupies 111 to 218 (QEGRCYHYSR…CDTPRRCLCG (108 aa)). Residues Cys-193 and Cys-209 are joined by a disulfide bond.

This chain is Putative C-type lectin protein 51 (51), found in Equine herpesvirus 2 (strain 86/87) (EHV-2).